Here is an 819-residue protein sequence, read N- to C-terminus: Probable phosphoenolpyruvate synthase (819 aa).

The active-site Tele-phosphohistidine intermediate is His441. The substrate site is built by Arg540, Arg587, Glu684, Gly706, Thr707, Asn708, and Asp709. Glu684 provides a ligand contact to Mg(2+). Asp709 lines the Mg(2+) pocket. Cys756 serves as the catalytic Proton donor.

The protein belongs to the PEP-utilizing enzyme family. Mg(2+) serves as cofactor.

It catalyses the reaction pyruvate + ATP + H2O = phosphoenolpyruvate + AMP + phosphate + 2 H(+). The protein operates within carbohydrate biosynthesis; gluconeogenesis. Its function is as follows. Catalyzes the phosphorylation of pyruvate to phosphoenolpyruvate. The chain is Probable phosphoenolpyruvate synthase (ppsA) from Pyrococcus abyssi (strain GE5 / Orsay).